The chain runs to 61 residues: Short neurotoxin 2 (61 aa).

Cystine bridges form between Cys-3-Cys-23, Cys-17-Cys-40, Cys-42-Cys-53, and Cys-54-Cys-59.

The protein belongs to the three-finger toxin family. Short-chain subfamily. Type I alpha-neurotoxin sub-subfamily. In terms of tissue distribution, expressed by the venom gland.

The protein resides in the secreted. Its function is as follows. Binds to muscle nicotinic acetylcholine receptor (nAChR) and inhibit acetylcholine from binding to the receptor, thereby impairing neuromuscular transmission. The protein is Short neurotoxin 2 of Naja nivea (Cape cobra).